The primary structure comprises 194 residues: Large ribosomal subunit protein bL9 (194 aa).

The span at 166–184 shows a compositional bias: low complexity; that stretch reads AENQAQADEQAGELAAAAA. The segment at 166-194 is disordered; sequence AENQAQADEQAGELAAAAAERGDMGGDEE. Residues 185–194 show a composition bias toward basic and acidic residues; that stretch reads ERGDMGGDEE.

It belongs to the bacterial ribosomal protein bL9 family.

Its function is as follows. Binds to the 23S rRNA. The chain is Large ribosomal subunit protein bL9 from Hyphomonas neptunium (strain ATCC 15444).